The primary structure comprises 651 residues: Threonine--tRNA ligase (651 aa).

Residues 1-64 enclose the TGS domain; it reads MSSVVHVTLP…EKDCTLQVLT (64 aa). The tract at residues 245 to 535 is catalytic; the sequence is DHRRLGPELG…LTEHYAGNFP (291 aa). Zn(2+) is bound by residues C336, H387, and H512.

This sequence belongs to the class-II aminoacyl-tRNA synthetase family. As to quaternary structure, homodimer. It depends on Zn(2+) as a cofactor.

It is found in the cytoplasm. It carries out the reaction tRNA(Thr) + L-threonine + ATP = L-threonyl-tRNA(Thr) + AMP + diphosphate + H(+). Catalyzes the attachment of threonine to tRNA(Thr) in a two-step reaction: L-threonine is first activated by ATP to form Thr-AMP and then transferred to the acceptor end of tRNA(Thr). Also edits incorrectly charged L-seryl-tRNA(Thr). The protein is Threonine--tRNA ligase of Symbiobacterium thermophilum (strain DSM 24528 / JCM 14929 / IAM 14863 / T).